Here is a 102-residue protein sequence, read N- to C-terminus: Small ribosomal subunit protein uS10 (102 aa).

This sequence belongs to the universal ribosomal protein uS10 family. As to quaternary structure, part of the 30S ribosomal subunit.

Its function is as follows. Involved in the binding of tRNA to the ribosomes. This chain is Small ribosomal subunit protein uS10, found in Oenococcus oeni (strain ATCC BAA-331 / PSU-1).